Here is a 1434-residue protein sequence, read N- to C-terminus: Pleiotropic drug resistance protein 1 (1434 aa).

Residues 1–22 (MEPANLSNLRGSSLRGSTRGSL) form a disordered region. The region spanning 161–434 (LNSLHILSSR…FESMGFKCPQ (274 aa)) is the ABC transporter 1 domain. 194–201 (GPPSSGKT) contacts ATP. Positions 512–725 (ELLKVCTERE…SVNSILVNEF (214 aa)) constitute an ABC transmembrane type-2 1 domain. 7 helical membrane-spanning segments follow: residues 530–550 (FVYMFKFSQLTIMALITMTLF), 563–583 (GGIYAGALFFVVIMIMFNGMS), 618–638 (IPVTLVEVGLWVILTYYVIGF), 649–669 (FLLLIVVNQMASGMFRFIGAV), 675–695 (VASTFGSFALLLQFALGGFVL), 702–722 (SWWIWGYWISPMMYSVNSILV), and 760–780 (IGVGALVGFTVVFNFCYSLAL). Positions 793–824 (LPEDGENAENGEVSSQITSTDGGDSISESQNN) are disordered. Over residues 804-824 (EVSSQITSTDGGDSISESQNN) the composition is skewed to polar residues. An ABC transporter 2 domain is found at 837–1089 (ITFDDVVYSV…HLIKYFESNP (253 aa)). 882 to 889 (GVSGAGKT) is an ATP binding site. In terms of domain architecture, ABC transmembrane type-2 2 spans 1162-1376 (TQCVACLWKQ…TLYGLVASQF (215 aa)). 7 helical membrane passes run 1181-1201 (YTAVRFIFTTFIALIFGTMFW), 1221-1241 (YAAVLFLGVQNASSVQPVVAI), 1269-1289 (IPYIFVQSVFYGIIVYAMIGF), 1296-1316 (FFWYLFIMFFTLLYFTFYGMM), 1326-1346 (VASIVAAFFYGVWNLFSGFII), 1357-1377 (WYYWANPVAWTLYGLVASQFG), and 1406-1426 (VVAAVLTAYVFMFAFTFAFAI).

This sequence belongs to the ABC transporter superfamily. ABCG family. PDR (TC 3.A.1.205) subfamily.

It localises to the membrane. Its function is as follows. May be a general defense protein. The polypeptide is Pleiotropic drug resistance protein 1 (PDR1) (Nicotiana tabacum (Common tobacco)).